A 210-amino-acid polypeptide reads, in one-letter code: Small ribosomal subunit protein uS4 (210 aa).

In terms of domain architecture, S4 RNA-binding spans 100-160 (GRLDNVVYRM…EKSKNQLRVK (61 aa)).

It belongs to the universal ribosomal protein uS4 family. Part of the 30S ribosomal subunit. Contacts protein S5. The interaction surface between S4 and S5 is involved in control of translational fidelity.

Its function is as follows. One of the primary rRNA binding proteins, it binds directly to 16S rRNA where it nucleates assembly of the body of the 30S subunit. With S5 and S12 plays an important role in translational accuracy. This Alcanivorax borkumensis (strain ATCC 700651 / DSM 11573 / NCIMB 13689 / SK2) protein is Small ribosomal subunit protein uS4.